We begin with the raw amino-acid sequence, 458 residues long: O-acetyltransferase dmxR13 (458 aa).

A disordered region spans residues 211 to 231 (ELARQISQPRPPPSSDGPPPP). A compositionally biased stretch (pro residues) spans 219 to 231 (PRPPPSSDGPPPP).

The protein belongs to the trichothecene 3-O-acetyltransferase family.

Its pathway is secondary metabolite biosynthesis. Its function is as follows. O-acetyltransferase; part of the gene cluster that mediates the biosynthesis of the dimeric xanthones cryptosporioptides. The pathway begins with the synthesis of atrochrysone thioester by the polyketide synthase dmx-nrPKS. The atrochrysone carboxyl ACP thioesterase dmxR1 then breaks the thioester bond and releases the atrochrysone carboxylic acid from dmx-nrPKS. Atrochrysone carboxylic acid is decarboxylated by the decarboxylase dmxR15, and oxidized by the anthrone oxygenase dmxR16 to yield emodin. Emodin is then reduced to emodin hydroquinone by the oxidoreductase dmxR7. A-ring reduction by the short chain dehydrogenase dmxR18, dehydration by the scytalone dehydratase-like protein dmxR17 and probable spontaneous re-oxidation, results in overall deoxygenation to chrysophanol. Baeyer-Villiger oxidation by the Baeyer-Villiger monooxygenase (BVMO) dmxR6 then yields monodictylactone in equilibrium with monodictyphenone. In the case of the cryptosporioptides biosynthesis, monodictylactone is reduced at C-12 to an alcohol (by the short chain dehydrogenases dmxR12 or dmxR8) and hydroxylated at C-5 by dmxR9, yielding the electron-rich aromatic which could eliminate H(2)O to form the ortho-quinonemethide, followed by tautomerisation to paraquinone and complete the formal reduction to produce the 10-methylgroup. Conjugate addition of C-4a-OH to the resulting paraquinone by the monooxygenase dmxR10 then gives cyclohexadienone, which is then reduced at C-5 by the short chain dehydrogenase dmxR3 to give the dihydroxanthone. The 6,7-epoxide in the cryptosporioptides could be introduced by the cytochrome P450 monooxygenase dmxL3. The highly reducing PKS dmxL2 manufactures butyrate, which is further carboxylated by dmxL1 to form ethylmalonate. It is not yet clear whether the carboxylation occurs while the butyrate is attached to the ACP of dmxL2, but this unusual fungal metabolite could then be esterified to O-5 by the O-acetyltransferase dmxR13. Finally, dimerization performed by dmxR5 gives the observed dimers cryptosporioptides A, B and C as the final products of the pathway. This Cryptosporiopsis sp. (strain 8999) protein is O-acetyltransferase dmxR13.